Reading from the N-terminus, the 329-residue chain is Catabolite control protein A (329 aa).

The region spanning 1-57 is the HTH lacI-type domain; that stretch reads MTVTIYDVAREARVSMATVSRVVNGNQNVKPETRNKVNEVIKRLNYRPNAVARGLAS. A DNA-binding region (H-T-H motif) is located at residues 5–24; that stretch reads IYDVAREARVSMATVSRVVN.

Global transcriptional regulator of carbon catabolite repression (CCR) and carbon catabolite activation (CCA), which ensures optimal energy usage under diverse conditions. This is Catabolite control protein A (ccpA) from Staphylococcus epidermidis (strain ATCC 12228 / FDA PCI 1200).